A 412-amino-acid polypeptide reads, in one-letter code: Tryptophan synthase beta chain 1 (412 aa).

Position 103 is an N6-(pyridoxal phosphate)lysine (K103).

Belongs to the TrpB family. Tetramer of two alpha and two beta chains. Pyridoxal 5'-phosphate is required as a cofactor.

It catalyses the reaction (1S,2R)-1-C-(indol-3-yl)glycerol 3-phosphate + L-serine = D-glyceraldehyde 3-phosphate + L-tryptophan + H2O. The protein operates within amino-acid biosynthesis; L-tryptophan biosynthesis; L-tryptophan from chorismate: step 5/5. Its function is as follows. The beta subunit is responsible for the synthesis of L-tryptophan from indole and L-serine. This is Tryptophan synthase beta chain 1 (trpB1) from Chlamydia caviae (strain ATCC VR-813 / DSM 19441 / 03DC25 / GPIC) (Chlamydophila caviae).